We begin with the raw amino-acid sequence, 145 residues long: Flagellar assembly factor FliW (145 aa).

It belongs to the FliW family. Interacts with translational regulator CsrA and flagellin(s).

Its subcellular location is the cytoplasm. Its function is as follows. Acts as an anti-CsrA protein, binds CsrA and prevents it from repressing translation of its target genes, one of which is flagellin. Binds to flagellin and participates in the assembly of the flagellum. The polypeptide is Flagellar assembly factor FliW (Anoxybacillus flavithermus (strain DSM 21510 / WK1)).